We begin with the raw amino-acid sequence, 62 residues long: MKSTSVFILFAGIAIMACLQMTGTEAAPSASPNPTPVARADPDPEAFGPVIGLLSGILKSLL.

The first 26 residues, 1 to 26 (MKSTSVFILFAGIAIMACLQMTGTEA), serve as a signal peptide directing secretion. AXPX repeat units lie at residues 26–29 (AAPS), 30–33 (ASPN), and 40–43 (ADPD). Residues 27 to 46 (APSASPNPTPVARADPDPEA) constitute a propeptide that is removed on maturation.

Belongs to the MCD family. In terms of tissue distribution, expressed by the venom gland.

The protein localises to the secreted. The protein resides in the target cell membrane. In terms of biological role, antimicrobial peptide with strong activity against the fungus B.cinerea (MIC=5 uM) and the Gram-positive bacterium S.aureus (MIC=50 uM), and no activity against C.albicans (MIC&gt;200 uM), and the Gram-negative bacterium E.coli (MIC&gt;200 uM). Shows cytolytic activity against insect cell lines. Has no hemolytic activity against human erythrocytes. In vivo, peptide injection in the vicinity of the head and thorax of lepidopteran larvae induces feeding disorder that lasts one or two days before recovering. This is Venom peptide 6 from Eumenes pomiformis (Potter wasp).